Consider the following 150-residue polypeptide: Large ribosomal subunit protein bL9 (150 aa).

This sequence belongs to the bacterial ribosomal protein bL9 family.

Binds to the 23S rRNA. The sequence is that of Large ribosomal subunit protein bL9 from Shewanella woodyi (strain ATCC 51908 / MS32).